The chain runs to 178 residues: SPbeta prophage-derived uncharacterized protein YonC (178 aa).

This chain is SPbeta prophage-derived uncharacterized protein YonC (yonC), found in Bacillus subtilis (strain 168).